Here is a 134-residue protein sequence, read N- to C-terminus: MPPKTRAAGAKKVRRKEKKNVAHGHAHIKSTFNNTIVSITDPSGNVISWASAGHVGFKGSRKSTPFAAQMAAENAARKAQEHGMRKVDVFVKGPGSGRETAIRSLQAAGLEVGAIQDVTPTPHNGCRPPKRRRV.

It belongs to the universal ribosomal protein uS11 family. In terms of assembly, part of the 30S ribosomal subunit. Interacts with proteins S7 and S18. Binds to IF-3.

Functionally, located on the platform of the 30S subunit, it bridges several disparate RNA helices of the 16S rRNA. Forms part of the Shine-Dalgarno cleft in the 70S ribosome. This chain is Small ribosomal subunit protein uS11, found in Frankia casuarinae (strain DSM 45818 / CECT 9043 / HFP020203 / CcI3).